The chain runs to 426 residues: Putative acid phosphatase 1 (426 aa).

The signal sequence occupies residues 1–18; that stretch reads MRVLFYVSILVIIASVHT. At 19–388 the chain is on the extracellular side; it reads QLISVHVIFR…SEWVMTPLSW (370 aa). The active-site Nucleophile is the His-29. 2 N-linked (GlcNAc...) asparagine glycosylation sites follow: Asn-37 and Asn-145. Cys-133 and Cys-369 are oxidised to a cystine. Asp-276 serves as the catalytic Proton donor. The helical transmembrane segment at 389 to 409 threads the bilayer; the sequence is IIVAIAILLLIALILMTYFVI. Topologically, residues 410–426 are cytoplasmic; that stretch reads RYKNRSIVNIKKLSLEN.

The protein belongs to the histidine acid phosphatase family.

It localises to the membrane. The catalysed reaction is a phosphate monoester + H2O = an alcohol + phosphate. This chain is Putative acid phosphatase 1, found in Caenorhabditis elegans.